Consider the following 361-residue polypeptide: Caspase activity and apoptosis inhibitor 1 (361 aa).

The segment covering methionine 1–arginine 14 has biased composition (basic residues). Disordered stretches follow at residues methionine 1–isoleucine 28 and glycine 67–glutamine 100. Positions alanine 19–isoleucine 28 are enriched in low complexity. Serine 89 is subject to Phosphoserine. Position 90 is a phosphothreonine (threonine 90). Residue lysine 104 forms a Glycyl lysine isopeptide (Lys-Gly) (interchain with G-Cter in SUMO2) linkage. Phosphoserine occurs at positions 120 and 203. Disordered stretches follow at residues aspartate 198–aspartate 218 and alanine 230–proline 331. A compositionally biased stretch (acidic residues) spans asparagine 199–aspartate 210. Residues arginine 234–aspartate 251 are compositionally biased toward basic and acidic residues. The segment covering glutamate 272–glutamate 281 has biased composition (low complexity). The stretch at glutamate 281–serine 311 forms a coiled coil. Serine 312 carries the post-translational modification Phosphoserine.

In terms of tissue distribution, ubiquitous.

Anti-apoptotic protein that modulates a caspase-10 dependent mitochondrial caspase-3/9 feedback amplification loop. This is Caspase activity and apoptosis inhibitor 1 (CAAP1) from Homo sapiens (Human).